We begin with the raw amino-acid sequence, 148 residues long: UPF0178 protein SUN_1096 (148 aa).

The protein belongs to the UPF0178 family.

The chain is UPF0178 protein SUN_1096 from Sulfurovum sp. (strain NBC37-1).